The chain runs to 205 residues: Histidine biosynthesis bifunctional protein HisIE (205 aa).

The phosphoribosyl-AMP cyclohydrolase stretch occupies residues 1 to 116 (MLKLKFNEEG…KVEKPLPFEV (116 aa)). Residues 117–205 (LPRLQDVIRE…VMEELIRRFK (89 aa)) form a phosphoribosyl-ATP pyrophosphohydrolase region.

In the N-terminal section; belongs to the PRA-CH family. It in the C-terminal section; belongs to the PRA-PH family.

Its subcellular location is the cytoplasm. The enzyme catalyses 1-(5-phospho-beta-D-ribosyl)-ATP + H2O = 1-(5-phospho-beta-D-ribosyl)-5'-AMP + diphosphate + H(+). It catalyses the reaction 1-(5-phospho-beta-D-ribosyl)-5'-AMP + H2O = 1-(5-phospho-beta-D-ribosyl)-5-[(5-phospho-beta-D-ribosylamino)methylideneamino]imidazole-4-carboxamide. It participates in amino-acid biosynthesis; L-histidine biosynthesis; L-histidine from 5-phospho-alpha-D-ribose 1-diphosphate: step 2/9. Its pathway is amino-acid biosynthesis; L-histidine biosynthesis; L-histidine from 5-phospho-alpha-D-ribose 1-diphosphate: step 3/9. This chain is Histidine biosynthesis bifunctional protein HisIE (hisI), found in Aquifex aeolicus (strain VF5).